A 496-amino-acid chain; its full sequence is Cytochrome P450 71D180 (496 aa).

Residues 1–21 (MDISISWVVIIVFVLSYLILM) traverse the membrane as a helical; Signal-anchor for type II membrane protein segment. Cys435 is a heme binding site. Positions 471 to 496 (MSETPGLSGPRKNPLIMIPTIHNPTS) are disordered.

The protein belongs to the cytochrome P450 family. Heme is required as a cofactor.

The protein resides in the membrane. It catalyses the reaction gamma-terpinene + 2 reduced [NADPH--hemoprotein reductase] + 2 O2 = carvacrol + 2 oxidized [NADPH--hemoprotein reductase] + 3 H2O + 2 H(+). The catalysed reaction is (4S)-limonene + reduced [NADPH--hemoprotein reductase] + O2 = (1S,5R)-carveol + oxidized [NADPH--hemoprotein reductase] + H2O + H(+). It carries out the reaction (4R)-limonene + reduced [NADPH--hemoprotein reductase] + O2 = (1R,5S)-carveol + oxidized [NADPH--hemoprotein reductase] + H2O + H(+). It functions in the pathway secondary metabolite biosynthesis; terpenoid biosynthesis. Involved in the biosynthesis of phenolic monoterpenes natural products thymol and carvacrol which have a broad range of biological activities acting as antimicrobial compounds, insecticides, antioxidants and pharmaceutical agents. Catalyzes the C2-hydroxylation of gamma-terpinene to produce carvacrol. Mediates also the C6-hydroxylation of (4S)-limonene and (4R)-limonene to form carveol. In Origanum majorana (Sweet marjoram), this protein is Cytochrome P450 71D180.